A 104-amino-acid polypeptide reads, in one-letter code: Large ribosomal subunit protein uL24 (104 aa).

This sequence belongs to the universal ribosomal protein uL24 family. In terms of assembly, part of the 50S ribosomal subunit.

In terms of biological role, one of two assembly initiator proteins, it binds directly to the 5'-end of the 23S rRNA, where it nucleates assembly of the 50S subunit. One of the proteins that surrounds the polypeptide exit tunnel on the outside of the subunit. The chain is Large ribosomal subunit protein uL24 from Pseudoalteromonas atlantica (strain T6c / ATCC BAA-1087).